Reading from the N-terminus, the 216-residue chain is MIF4G domain-containing protein A (216 aa).

Residues 2–199 (DSAWTALDME…LEILEFRASG (198 aa)) form the MIF4G domain.

Belongs to the MIF4GD family. In terms of assembly, interacts with eif4g1, eif4g2 and slbp; probably tethered by SLBP to the 3'-end of mRNAs ending with the histone stem-loop, it also interacts with eif4g1 which is bound to their 5'-end.

The protein resides in the cytoplasm. Its subcellular location is the nucleus. Its function is as follows. Functions in replication-dependent translation of histone mRNAs which differ from other eukaryotic mRNAs in that they do not end with a poly-A tail but a stem-loop. May participate in circularizing those mRNAs specifically enhancing their translation. The sequence is that of MIF4G domain-containing protein A (mif4gda) from Danio rerio (Zebrafish).